Here is a 785-residue protein sequence, read N- to C-terminus: DNA ligase (785 aa).

NAD(+)-binding positions include 32–36 (DAEYD), 81–82 (SL), and glutamate 121. The active-site N6-AMP-lysine intermediate is the lysine 123. The NAD(+) site is built by arginine 144, glutamate 181, lysine 297, and lysine 321. Zn(2+)-binding residues include cysteine 415, cysteine 418, cysteine 445, and cysteine 451. The BRCT domain occupies 702-785 (VEGLPLAGET…AFLKGHGISA (84 aa)).

Belongs to the NAD-dependent DNA ligase family. LigA subfamily. Mg(2+) serves as cofactor. The cofactor is Mn(2+).

It catalyses the reaction NAD(+) + (deoxyribonucleotide)n-3'-hydroxyl + 5'-phospho-(deoxyribonucleotide)m = (deoxyribonucleotide)n+m + AMP + beta-nicotinamide D-nucleotide.. In terms of biological role, DNA ligase that catalyzes the formation of phosphodiester linkages between 5'-phosphoryl and 3'-hydroxyl groups in double-stranded DNA using NAD as a coenzyme and as the energy source for the reaction. It is essential for DNA replication and repair of damaged DNA. This is DNA ligase from Pseudomonas fluorescens (strain Pf0-1).